A 103-amino-acid polypeptide reads, in one-letter code: MQNQRIRIRLKGFDHRLIDQSTAEIVETAKRTGAQVRGPIPLPTRKERYTVLISPHVNKDARDQYELRTHKRLVDIVEPTEKTVDALMRLDLAAGVDVQISLG.

The protein belongs to the universal ribosomal protein uS10 family. As to quaternary structure, part of the 30S ribosomal subunit.

In terms of biological role, involved in the binding of tRNA to the ribosomes. The polypeptide is Small ribosomal subunit protein uS10 (Shewanella loihica (strain ATCC BAA-1088 / PV-4)).